The primary structure comprises 239 residues: Probable transcriptional regulatory protein Aave_3203 (239 aa).

The interval 1 to 20 (MAGHSKWANIQHRKGRQDEK) is disordered.

This sequence belongs to the TACO1 family.

It is found in the cytoplasm. This chain is Probable transcriptional regulatory protein Aave_3203, found in Paracidovorax citrulli (strain AAC00-1) (Acidovorax citrulli).